Consider the following 203-residue polypeptide: V-type ATP synthase subunit D (203 aa).

It belongs to the V-ATPase D subunit family.

Functionally, produces ATP from ADP in the presence of a proton gradient across the membrane. This Streptococcus pneumoniae (strain CGSP14) protein is V-type ATP synthase subunit D.